The primary structure comprises 197 residues: Xanthine phosphoribosyltransferase (197 aa).

Residues leucine 20 and asparagine 27 each coordinate xanthine. Alanine 128–alanine 132 is a binding site for 5-phospho-alpha-D-ribose 1-diphosphate. Residue lysine 156 participates in xanthine binding.

Belongs to the purine/pyrimidine phosphoribosyltransferase family. Xpt subfamily. As to quaternary structure, homodimer.

The protein resides in the cytoplasm. The catalysed reaction is XMP + diphosphate = xanthine + 5-phospho-alpha-D-ribose 1-diphosphate. It functions in the pathway purine metabolism; XMP biosynthesis via salvage pathway; XMP from xanthine: step 1/1. Functionally, converts the preformed base xanthine, a product of nucleic acid breakdown, to xanthosine 5'-monophosphate (XMP), so it can be reused for RNA or DNA synthesis. This chain is Xanthine phosphoribosyltransferase, found in Bacillus anthracis (strain A0248).